The sequence spans 221 residues: Probable septum site-determining protein MinC (221 aa).

Belongs to the MinC family. As to quaternary structure, interacts with MinD and FtsZ.

Functionally, cell division inhibitor that blocks the formation of polar Z ring septums. Rapidly oscillates between the poles of the cell to destabilize FtsZ filaments that have formed before they mature into polar Z rings. Prevents FtsZ polymerization. This is Probable septum site-determining protein MinC from Shewanella oneidensis (strain ATCC 700550 / JCM 31522 / CIP 106686 / LMG 19005 / NCIMB 14063 / MR-1).